We begin with the raw amino-acid sequence, 198 residues long: Putative 3-methyladenine DNA glycosylase (198 aa).

Belongs to the DNA glycosylase MPG family.

The sequence is that of Putative 3-methyladenine DNA glycosylase from Oceanobacillus iheyensis (strain DSM 14371 / CIP 107618 / JCM 11309 / KCTC 3954 / HTE831).